A 190-amino-acid chain; its full sequence is Prostaglandin-H2 D-isomerase (190 aa).

An N-terminal signal peptide occupies residues 1–22 (MATHHTLWMGLVLLGLLGGLQA). Asn-51 carries an N-linked (GlcNAc...) asparagine glycan. Cys-65 functions as the Nucleophile in the catalytic mechanism. Asn-78 is a glycosylation site (N-linked (GlcNAc...) asparagine). A disulfide bridge links Cys-89 with Cys-186.

It belongs to the calycin superfamily. Lipocalin family. As to quaternary structure, monomer.

The protein localises to the rough endoplasmic reticulum. Its subcellular location is the nucleus membrane. The protein resides in the golgi apparatus. It localises to the cytoplasm. It is found in the perinuclear region. The protein localises to the secreted. It carries out the reaction prostaglandin H2 = prostaglandin D2. Catalyzes the conversion of PGH2 to PGD2, a prostaglandin involved in smooth muscle contraction/relaxation and a potent inhibitor of platelet aggregation. Involved in a variety of CNS functions, such as sedation, NREM sleep and PGE2-induced allodynia, and may have an anti-apoptotic role in oligodendrocytes. Binds small non-substrate lipophilic molecules, including biliverdin, bilirubin, retinal, retinoic acid and thyroid hormone, and may act as a scavenger for harmful hydrophobic molecules and as a secretory retinoid and thyroid hormone transporter. Possibly involved in development and maintenance of the blood-brain, blood-retina, blood-aqueous humor and blood-testis barrier. It is likely to play important roles in both maturation and maintenance of the central nervous system and male reproductive system. Involved in PLA2G3-dependent maturation of mast cells. PLA2G3 is secreted by immature mast cells and acts on nearby fibroblasts upstream to PTDGS to synthesize PGD2, which in turn promotes mast cell maturation and degranulation via PTGDR. The chain is Prostaglandin-H2 D-isomerase (PTGDS) from Macaca fuscata fuscata (Japanese macaque).